Reading from the N-terminus, the 312-residue chain is Olfactory receptor 4F3/4F16/4F29 (312 aa).

Residues 1-25 (MDGENHSVVSEFLFLGLTHSWEIQL) are Extracellular-facing. A glycan (N-linked (GlcNAc...) asparagine) is linked at Asn-5. The helical transmembrane segment at 26–49 (LLLVFSSVLYVASITGNILIVFSV) threads the bilayer. The Cytoplasmic segment spans residues 50 to 57 (TTDPHLHS). The helical transmembrane segment at 58–79 (PMYFLLASLSFIDLGACSVTSP) threads the bilayer. Residues 80–100 (KMIYDLFRKRKVISFGGCIAQ) lie on the Extracellular side of the membrane. An intrachain disulfide couples Cys-97 to Cys-189. A helical membrane pass occupies residues 101–120 (IFFIHVVGGVEMVLLIAMAF). Residues 121 to 139 (DRYVALCKPLHYLTIMSPR) lie on the Cytoplasmic side of the membrane. Residues 140–158 (MCLSFLAVAWTLGVSHSLF) form a helical membrane-spanning segment. Over 159–195 (QLAFLVNLAFCGPNVLDSFYCDLPRLLRLACTDTYRL) the chain is Extracellular. Residues 196 to 219 (QFMVTVNSGFICVGTFFILLISYV) traverse the membrane as a helical segment. Over 220-235 (FILFTVWKHSSGGSSK) the chain is Cytoplasmic. Residues 236-258 (ALSTLSAHSTVVLLFFGPPMFVY) traverse the membrane as a helical segment. Residues 259–269 (TRPHPNSQMDK) lie on the Extracellular side of the membrane. A helical membrane pass occupies residues 270–289 (FLAIFDAVLTPFLNPVVYTF). Over 290-312 (RNKEMKAAIKRVCKQLVIYKRIS) the chain is Cytoplasmic.

This sequence belongs to the G-protein coupled receptor 1 family.

The protein localises to the cell membrane. Its function is as follows. Odorant receptor. The polypeptide is Olfactory receptor 4F3/4F16/4F29 (OR4F3) (Homo sapiens (Human)).